The sequence spans 253 residues: Exosome complex component Rrp4 (253 aa).

Residues 80-153 (GDIVIGIVVD…SRGPILTVQD (74 aa)) form the S1 motif domain.

It belongs to the RRP4 family. As to quaternary structure, component of the archaeal exosome complex. Forms a trimer of Rrp4 and/or Csl4 subunits. The trimer associates with a hexameric ring-like arrangement composed of 3 Rrp41-Rrp42 heterodimers.

The protein resides in the cytoplasm. Its function is as follows. Non-catalytic component of the exosome, which is a complex involved in RNA degradation. Increases the RNA binding and the efficiency of RNA degradation. Confers strong poly(A) specificity to the exosome. In Ignisphaera aggregans (strain DSM 17230 / JCM 13409 / AQ1.S1), this protein is Exosome complex component Rrp4.